Here is a 608-residue protein sequence, read N- to C-terminus: Scaffold protein salvador (608 aa).

Disordered stretches follow at residues 17-37 (SRRN…YMKK), 64-145 (STSP…SQNS), 157-202 (MRRQ…YDAD), 220-243 (PHSP…QQHA), 264-293 (QPRY…HTQL), and 345-425 (PQHH…ELPL). Residues 22-37 (EKSQHKEGVVGKYMKK) show a composition bias toward basic and acidic residues. Positions 32–38 (GKYMKKD) match the Ferm-binding motif (FBM) motif. The span at 64–89 (STSPSCEFHPRSSSTSRNTYSCTDSQ) shows a compositional bias: polar residues. Basic residues predominate over residues 108–125 (SHSHPHSLPHPSHPHVRS). Composition is skewed to low complexity over residues 160–172 (QQSS…TSSP), 229–242 (PPQQ…HQQH), and 275–289 (QQQQ…QQLQ). A coiled-coil region spans residues 274–294 (MQQQQQQQQQQQQQLQHTQLA). Residues 358 to 373 (GSGGGSLSGSGRGGSS) show a composition bias toward gly residues. Phosphoserine occurs at positions 413 and 416. WW domains follow at residues 423–456 (LPLP…HPLE) and 458–491 (EGLP…HPCL). The region spanning 552–599 (LLQFNMFSLPELEGFDSMLVRLFKQELGTIVGFYERYRRALILEKNRR) is the SARAH domain.

Interacts with Wts via its WW domains. Interacts (via FBM motif) with Mer (via FERM domain). Interacts with Kibra. Interacts with Hpo (via SARAH domain). Interacts with jub. In terms of processing, phosphorylated by Hpo. In terms of tissue distribution, third instar larvae eye disk, expressed in a stripe in the morphogenetic furrow, decreases in the region of the second mitotic wave (SMW) and increases once again posterior to the SMW.

Functionally, plays a key role in the Hippo/SWH (Sav/Wts/Hpo) signaling pathway, a signaling pathway that plays a pivotal role in organ size control and tumor suppression by restricting proliferation and promoting apoptosis. The core of this pathway is composed of a kinase cascade wherein Hippo (Hpo), in complex with its regulatory protein Salvador (Sav), phosphorylates and activates Warts (Wts) in complex with its regulatory protein Mats, which in turn phosphorylates and inactivates the Yorkie (Yki) oncoprotein. The Hippo/SWH signaling pathway inhibits the activity of the transcriptional complex formed by Scalloped (sd) and Yki and the target genes of this pathway include cyclin-E (cycE), diap1 and bantam. Required for cell cycle exit in eye imaginal disk and hid-induced apoptotic cell deaths that are part of normal retinal development. Activation of Drice in eye imaginal disk by either Hid or Rpr is almost completely blocked by Sav expression. In Drosophila melanogaster (Fruit fly), this protein is Scaffold protein salvador (sav).